Reading from the N-terminus, the 429-residue chain is Phosphoribosylamine--glycine ligase (429 aa).

An ATP-grasp domain is found at 109 to 316 (KDFLARHNIP…LVELCLAACE (208 aa)). An ATP-binding site is contributed by 135 to 196 (LREKGAPIVI…EEFLDGEEAS (62 aa)). A disordered region spans residues 212-236 (SQDHKRVGDKDTGPNTGGMGAYSPA). Residues 213 to 223 (QDHKRVGDKDT) show a composition bias toward basic and acidic residues. Mg(2+) contacts are provided by Glu286 and Asn288.

This sequence belongs to the GARS family. In terms of assembly, monomer. The cofactor is Mg(2+). Mn(2+) serves as cofactor.

The catalysed reaction is 5-phospho-beta-D-ribosylamine + glycine + ATP = N(1)-(5-phospho-beta-D-ribosyl)glycinamide + ADP + phosphate + H(+). It participates in purine metabolism; IMP biosynthesis via de novo pathway; N(1)-(5-phospho-D-ribosyl)glycinamide from 5-phospho-alpha-D-ribose 1-diphosphate: step 2/2. The chain is Phosphoribosylamine--glycine ligase from Escherichia coli O6:H1 (strain CFT073 / ATCC 700928 / UPEC).